The primary structure comprises 66 residues: Large ribosomal subunit protein bL33c (66 aa).

In terms of assembly, component of the chloroplast large ribosomal subunit (LSU). Mature 70S chloroplast ribosomes of higher plants consist of a small (30S) and a large (50S) subunit. The 30S small subunit contains 1 molecule of ribosomal RNA (16S rRNA) and 24 different proteins. The 50S large subunit contains 3 rRNA molecules (23S, 5S and 4.5S rRNA) and 33 different proteins.

It is found in the plastid. The protein resides in the chloroplast. Functionally, component of the chloroplast ribosome (chloro-ribosome), a dedicated translation machinery responsible for the synthesis of chloroplast genome-encoded proteins, including proteins of the transcription and translation machinery and components of the photosynthetic apparatus. The sequence is that of Large ribosomal subunit protein bL33c (rpl33) from Spinacia oleracea (Spinach).